We begin with the raw amino-acid sequence, 145 residues long: Copper transporter 6 (145 aa).

A run of 2 helical transmembrane segments spans residues Leu47–Leu67 and Tyr99–Gly119.

It belongs to the copper transporter (Ctr) (TC 1.A.56) family. SLC31A subfamily.

It is found in the membrane. Its function is as follows. Involved in the transport of copper. In Arabidopsis thaliana (Mouse-ear cress), this protein is Copper transporter 6 (COPT6).